The following is a 448-amino-acid chain: Exodeoxyribonuclease 7 large subunit (448 aa).

Belongs to the XseA family. As to quaternary structure, heterooligomer composed of large and small subunits.

It is found in the cytoplasm. The catalysed reaction is Exonucleolytic cleavage in either 5'- to 3'- or 3'- to 5'-direction to yield nucleoside 5'-phosphates.. Bidirectionally degrades single-stranded DNA into large acid-insoluble oligonucleotides, which are then degraded further into small acid-soluble oligonucleotides. The sequence is that of Exodeoxyribonuclease 7 large subunit from Shewanella sp. (strain MR-7).